Here is a 146-residue protein sequence, read N- to C-terminus: Large ribosomal subunit protein uL16 (146 aa).

Belongs to the universal ribosomal protein uL16 family. In terms of assembly, part of the 50S ribosomal subunit.

Functionally, binds 23S rRNA and is also seen to make contacts with the A and possibly P site tRNAs. The protein is Large ribosomal subunit protein uL16 of Lactobacillus helveticus (strain DPC 4571).